Consider the following 113-residue polypeptide: T cell receptor alpha variable 12-2 (113 aa).

The N-terminal stretch at Met1–Ser20 is a signal peptide. Residues Lys23–Asn113 form the Ig-like domain. An N-linked (GlcNAc...) asparagine glycan is attached at Asn43. An intrachain disulfide couples Cys44 to Cys110.

Alpha-beta TR is a heterodimer composed of an alpha and beta chain; disulfide-linked. The alpha-beta TR is associated with the transmembrane signaling CD3 coreceptor proteins to form the TR-CD3 (TcR or TCR). The assembly of alpha-beta TR heterodimers with CD3 occurs in the endoplasmic reticulum where a single alpha-beta TR heterodimer associates with one CD3D-CD3E heterodimer, one CD3G-CD3E heterodimer and one CD247 homodimer forming a stable octameric structure. CD3D-CD3E and CD3G-CD3E heterodimers preferentially associate with TR alpha and TR beta chains, respectively. The association of the CD247 homodimer is the last step of TcR assembly in the endoplasmic reticulum and is required for transport to the cell surface.

The protein localises to the cell membrane. In terms of biological role, v region of the variable domain of T cell receptor (TR) alpha chain that participates in the antigen recognition. Alpha-beta T cell receptors are antigen specific receptors which are essential to the immune response and are present on the cell surface of T lymphocytes. Recognize peptide-major histocompatibility (MH) (pMH) complexes that are displayed by antigen presenting cells (APC), a prerequisite for efficient T cell adaptive immunity against pathogens. Binding of alpha-beta TR to pMH complex initiates TR-CD3 clustering on the cell surface and intracellular activation of LCK that phosphorylates the ITAM motifs of CD3G, CD3D, CD3E and CD247 enabling the recruitment of ZAP70. In turn ZAP70 phosphorylates LAT, which recruits numerous signaling molecules to form the LAT signalosome. The LAT signalosome propagates signal branching to three major signaling pathways, the calcium, the mitogen-activated protein kinase (MAPK) kinase and the nuclear factor NF-kappa-B (NF-kB) pathways, leading to the mobilization of transcription factors that are critical for gene expression and essential for T cell growth and differentiation. The T cell repertoire is generated in the thymus, by V-(D)-J rearrangement. This repertoire is then shaped by intrathymic selection events to generate a peripheral T cell pool of self-MH restricted, non-autoaggressive T cells. Post-thymic interaction of alpha-beta TR with the pMH complexes shapes TR structural and functional avidity. The chain is T cell receptor alpha variable 12-2 from Homo sapiens (Human).